Consider the following 45-residue polypeptide: MSKRTFQPNNRRRARTHGFRLRMRTRAGRSILSARRSKGRSQLSA.

The disordered stretch occupies residues 26–45 (RAGRSILSARRSKGRSQLSA).

This sequence belongs to the bacterial ribosomal protein bL34 family.

In Parafrankia sp. (strain EAN1pec), this protein is Large ribosomal subunit protein bL34.